Here is a 241-residue protein sequence, read N- to C-terminus: PHD finger protein ALFIN-LIKE 1 (241 aa).

A2 is subject to N-acetylalanine. Residues 142 to 182 (DGKPSMDLGSKSRNGVKRSIEGQTKSTPKLMEESYEDEDDE) form a disordered region. The segment at 185-237 (DTLCGSCGGNYTNDEFWICCDVCERWYHGKCVKITPAKAESIKQYKCPSCCTK) adopts a PHD-type zinc-finger fold.

Belongs to the Alfin family. In terms of assembly, interacts with H3K4me3 and to a lesser extent with H3K4me2. As to expression, ubiquitously expressed.

Its subcellular location is the nucleus. Histone-binding component that specifically recognizes H3 tails trimethylated on 'Lys-4' (H3K4me3), which mark transcription start sites of virtually all active genes. The sequence is that of PHD finger protein ALFIN-LIKE 1 (AL1) from Arabidopsis thaliana (Mouse-ear cress).